The sequence spans 186 residues: Adenine phosphoribosyltransferase (186 aa).

A132–S136 contributes to the AMP binding site.

Belongs to the purine/pyrimidine phosphoribosyltransferase family. As to quaternary structure, homodimer. It depends on Mg(2+) as a cofactor.

The protein resides in the cytoplasm. The protein localises to the nucleus. The catalysed reaction is AMP + diphosphate = 5-phospho-alpha-D-ribose 1-diphosphate + adenine. It functions in the pathway purine metabolism; AMP biosynthesis via salvage pathway; AMP from adenine: step 1/1. In terms of biological role, catalyzes a salvage reaction resulting in the formation of AMP, that is energically less costly than de novo synthesis. In Debaryomyces hansenii (strain ATCC 36239 / CBS 767 / BCRC 21394 / JCM 1990 / NBRC 0083 / IGC 2968) (Yeast), this protein is Adenine phosphoribosyltransferase (APT1).